The sequence spans 358 residues: Methylthioribose-1-phosphate isomerase (358 aa).

Substrate is bound by residues 54–56, R96, and Q205; that span reads RGA. D246 acts as the Proton donor in catalysis. Residue 256–257 coordinates substrate; it reads NK.

Belongs to the eIF-2B alpha/beta/delta subunits family. MtnA subfamily.

The catalysed reaction is 5-(methylsulfanyl)-alpha-D-ribose 1-phosphate = 5-(methylsulfanyl)-D-ribulose 1-phosphate. Its pathway is amino-acid biosynthesis; L-methionine biosynthesis via salvage pathway; L-methionine from S-methyl-5-thio-alpha-D-ribose 1-phosphate: step 1/6. Functionally, catalyzes the interconversion of methylthioribose-1-phosphate (MTR-1-P) into methylthioribulose-1-phosphate (MTRu-1-P). In Pseudomonas syringae pv. tomato (strain ATCC BAA-871 / DC3000), this protein is Methylthioribose-1-phosphate isomerase.